A 489-amino-acid polypeptide reads, in one-letter code: MELNELQQQRLAKLERLRAAGIDPYPPRTRRTHTIGFVLASFDQLMERGEQVTVAGRIVGARRILGKLAFAHIEDESGRIQIWLSRGDIGDEWFDRFRDDLDTFDIVEATGTLRRTQRGEPSVFVERLGVLAKSLNPPPEKWHGLSDIEERHRQRYLDLIVNPEVRDVFRTRAKIVSTMRRFLDERGFLEVETPTLQPIYGGASARPFITHHNQLKQDLYLRIAVELYLKRLIVGGFERVYEISKVFRNEGVDRTHNPEFTMMECYQAYADYNDMMRLVEDLYRTLALEVAGSTTIVFQGHTIDFGPAWQRVSIPTAIAARTGIDILELTELEPLQRAIRAVGLKVDLKPSWGKQVDEIFSVYVQPELIQPTFVIDHPVALSPLAKRRPDQPLLVERFEPIVAGMEVGNAFTELNDPLDQEQRFLEQGRAYDAGDDEAQQMDIDFLNALMYGMPPTGGLGIGIDRTVMLFTDQPSIREVILFPHMRPRD.

Mg(2+)-binding residues include Glu399 and Glu406.

The protein belongs to the class-II aminoacyl-tRNA synthetase family. Homodimer. Mg(2+) serves as cofactor.

The protein localises to the cytoplasm. The enzyme catalyses tRNA(Lys) + L-lysine + ATP = L-lysyl-tRNA(Lys) + AMP + diphosphate. This Roseiflexus sp. (strain RS-1) protein is Lysine--tRNA ligase.